We begin with the raw amino-acid sequence, 482 residues long: L-propargylglycine--L-glutamate ligase (482 aa).

The enzyme catalyses L-propargylglycine + L-glutamate + ATP = L-gamma-glutamyl-L-propargylglycine + ADP + phosphate + H(+). It participates in amino-acid metabolism. It functions in the pathway antibiotic biosynthesis. Its function is as follows. Involved in the biosynthesis of terminal alkyne-containing amino acids such as L-beta-ethynylserine, that are produced as antibiotics by S.cattleya. Catalyzes the ATP-dependent ligation of L-propargylglycine to L-glutamate to form the dipeptide L-gamma-glutamyl-L-propargylglycine. Is selective for L-propargylglycine over norvaline, allylglycine and the standard proteinogenic amino acids, except L-cysteine which can be used as a substrate to a lesser extent. The chain is L-propargylglycine--L-glutamate ligase from Streptantibioticus cattleyicolor (strain ATCC 35852 / DSM 46488 / JCM 4925 / NBRC 14057 / NRRL 8057) (Streptomyces cattleya).